Reading from the N-terminus, the 184-residue chain is Large ribosomal subunit protein uL22 (184 aa).

The segment at 160-184 is disordered; sequence PEEEVAQKKKISQKKLKKQKLMARE. Residues 167-184 show a composition bias toward basic residues; the sequence is KKKISQKKLKKQKLMARE.

Belongs to the universal ribosomal protein uL22 family. Component of the large ribosomal subunit.

It is found in the cytoplasm. Functionally, component of the large ribosomal subunit. The ribosome is a large ribonucleoprotein complex responsible for the synthesis of proteins in the cell. This Bos taurus (Bovine) protein is Large ribosomal subunit protein uL22 (RPL17).